The following is a 542-amino-acid chain: Berberine bridge enzyme-like 25 (542 aa).

The signal sequence occupies residues 1–30 (MGNSKPLPTISCISVFALYFSFYTITLTSS). Cys40 and Cys104 are oxidised to a cystine. Asn61 carries an N-linked (GlcNAc...) asparagine glycan. In terms of domain architecture, FAD-binding PCMH-type spans 82 to 258 (TMPKPGFIFK…LSWKIKLVPV (177 aa)). Residue His119 is modified to Pros-8alpha-FAD histidine. Residues Asn308 and Asn436 are each glycosylated (N-linked (GlcNAc...) asparagine).

It belongs to the oxygen-dependent FAD-linked oxidoreductase family. It depends on FAD as a cofactor.

The protein localises to the secreted. Its subcellular location is the cell wall. In Arabidopsis thaliana (Mouse-ear cress), this protein is Berberine bridge enzyme-like 25.